A 248-amino-acid chain; its full sequence is uncharacterized protein (248 aa).

Position 141 (serine 141) interacts with substrate. Tyrosine 154 (proton acceptor) is an active-site residue.

It belongs to the short-chain dehydrogenases/reductases (SDR) family.

This is an uncharacterized protein from Methylorubrum extorquens (strain ATCC 14718 / DSM 1338 / JCM 2805 / NCIMB 9133 / AM1) (Methylobacterium extorquens).